The sequence spans 88 residues: MKAVLVQMLKGYKRWISPLLPVSCRYVPTCSEYAMEAISIHGAVRGSVLALGRLLRCHPFVRGGYDPVPRSHSCCDDKISTTAHDAVR.

It belongs to the UPF0161 family.

Its subcellular location is the cell inner membrane. Functionally, could be involved in insertion of integral membrane proteins into the membrane. The sequence is that of Putative membrane protein insertion efficiency factor from Koribacter versatilis (strain Ellin345).